The primary structure comprises 187 residues: Abscisic acid receptor PYL9 (187 aa).

Residues 27 to 178 (HLCRENQCTS…NLKSLADVSE (152 aa)) form an START-like region. Disulfide bonds link cysteine 29–cysteine 159 and cysteine 34–cysteine 159. Residues lysine 63, 91–96 (ATTSTE), 118–124 (RLKNYSS), and glutamate 143 each bind abscisate. A Gate loop motif is present at residues 87 to 91 (SGLPA). A Latch loop motif is present at residues 117–119 (HRL).

Belongs to the PYR/PYL/RCAR abscisic acid intracellular receptor family. In terms of assembly, homodimer. Monomer. Binds ABA on one subunit only. Binds to CARs protein in an ABA-independent manner, both at the plasma membrane and in the nucleus. Binds specifically (+)-ABA but not (-)-ABA. Interacts with HAB1, ABI1 and ABI2, and possibly with other PP2Cs. Interacts with TOPP1. Interacts with DDA1. In terms of tissue distribution, expressed in root tips, vascular tissues, stomata, flowers, pollen tubes and developing seeds.

It localises to the cytoplasm. The protein resides in the nucleus. The protein localises to the cell membrane. Receptor for abscisic acid (ABA) required for ABA-mediated responses such as stomatal closure and germination inhibition. Inhibits the activity of group-A protein phosphatases type 2C (PP2Cs) in an ABA-independent manner but more efficiently when activated by ABA. Confers enhanced sensitivity to ABA. Can be activated only by (+)-ABA but not by (-)-ABA. This is Abscisic acid receptor PYL9 (PYL9) from Arabidopsis thaliana (Mouse-ear cress).